A 330-amino-acid polypeptide reads, in one-letter code: Aspartate--ammonia ligase (330 aa).

The protein belongs to the class-II aminoacyl-tRNA synthetase family. AsnA subfamily.

It localises to the cytoplasm. It carries out the reaction L-aspartate + NH4(+) + ATP = L-asparagine + AMP + diphosphate + H(+). The protein operates within amino-acid biosynthesis; L-asparagine biosynthesis; L-asparagine from L-aspartate (ammonia route): step 1/1. In Haemophilus influenzae (strain PittGG), this protein is Aspartate--ammonia ligase.